Here is a 370-residue protein sequence, read N- to C-terminus: Uroporphyrinogen decarboxylase (370 aa).

Substrate-binding positions include 29-33, aspartate 79, tyrosine 155, serine 210, and histidine 342; that span reads RQAGR.

This sequence belongs to the uroporphyrinogen decarboxylase family. As to quaternary structure, homodimer.

It is found in the cytoplasm. The enzyme catalyses uroporphyrinogen III + 4 H(+) = coproporphyrinogen III + 4 CO2. It functions in the pathway porphyrin-containing compound metabolism; protoporphyrin-IX biosynthesis; coproporphyrinogen-III from 5-aminolevulinate: step 4/4. Functionally, catalyzes the decarboxylation of four acetate groups of uroporphyrinogen-III to yield coproporphyrinogen-III. This chain is Uroporphyrinogen decarboxylase, found in Acidovorax ebreus (strain TPSY) (Diaphorobacter sp. (strain TPSY)).